Here is a 538-residue protein sequence, read N- to C-terminus: Retinoblastoma-binding protein 5 (538 aa).

2 WD repeats span residues 22–63 and 64–103; these read DCIS…KIIS and AHIH…CDQR. Lys-129 is covalently cross-linked (Glycyl lysine isopeptide (Lys-Gly) (interchain with G-Cter in SUMO2)). WD repeat units follow at residues 148–188, 196–235, 249–291, and 293–331; these read DDDS…LVAS, SNTT…TCGR, VNRT…KILH, and TRGE…NWSA. Thr-252 bears the Phosphothreonine; by CDK1 mark. The interaction with ASH2L stretch occupies residues 330–366; sequence SAFAPDFKELDENVEYEERESEFDIEDEDKSEPEQTG. A compositionally biased stretch (acidic residues) spans 344 to 360; it reads EYEERESEFDIEDEDKS. Residues 344–377 form a disordered region; the sequence is EYEERESEFDIEDEDKSEPEQTGADAAEDEEVDV. Residue Ser-350 is modified to Phosphoserine. The segment at 371-380 is interaction with WDR5; that stretch reads EDEEVDVTSV. A phosphoserine mark is found at Ser-388 and Ser-389. Residues 408-519 form a disordered region; sequence VEDPEENPYG…LPLEGSTKGK (112 aa). Over residues 479–490 the composition is skewed to basic residues; sequence SKKKQAGRPKGS. Over residues 491 to 510 the composition is skewed to basic and acidic residues; it reads KGKEKDSPFKPKLYKGDRGL. A Phosphoserine; by CDK1 modification is found at Ser-497. At Ser-525 the chain carries Phosphoserine.

As to quaternary structure, component of the SET1 complex, at least composed of the catalytic subunit (SETD1A or SETD1B), WDR5, WDR82, RBBP5, ASH2L/ASH2, CXXC1/CFP1, HCFC1 and DPY30. Core component of several methyltransferase-containing complexes including MLL1/MLL, MLL2/3 (also named ASCOM complex) and MLL4/WBP7. Each complex is at least composed of ASH2L, RBBP5, WDR5, DPY30, one or more specific histone methyltransferases (KMT2A/MLL1, KMT2D/MLL2, KMT2C/MLL3 and KMT2B/MLL4), and the facultative components PAGR1, BACC1, CHD8, E2F6, HCFC1, HCFC2, HSP70, INO80C, KDM6A, KANSL1, LAS1L, MAX, MCRS1, MEN1, MGA, MYST1/MOF, NCOA6, PAXIP1/PTIP, PELP1, PHF20, PRP31, RING2, RUVB1/TIP49A, RUVB2/TIP49B, SENP3, TAF1, TAF4, TAF6, TAF7, TAF9, TEX10 and alpha- and beta-tubulin. Component of a histone methylation complex composed of at least ZNF335, RBBP5, ASH2L and WDR5; the complex may have histone H3-specific methyltransferase activity, however does not have specificity for 'Lys-4' of histone H3. Interacts with ZNF335. Interacts with ASH2L; the interaction is direct. Interacts with WDR5; the interaction is direct. Components of the ZNF335-RBBP5-ASH2L-WDR5 histone methylation complex may associate with components of a nuclear receptor-mediated transcription complex to form a complex at least composed of ZNF335, HCFC1, CCAR2, EMSY, MKI67, RBBP5, ASH2L and WDR5. Within this complex interacts with EMSY. Found in a complex with RBBP5, ASH2L, DPY30, KMT2A, KMT2D and WDR5. Interacts with SETD1A. Interacts with WDR82.

Its subcellular location is the nucleus. Its function is as follows. In embryonic stem (ES) cells, plays a crucial role in the differentiation potential, particularly along the neural lineage, regulating gene induction and H3 'Lys-4' methylation at key developmental loci, including that mediated by retinoic acid. Does not affect ES cell self-renewal. Component or associated component of some histone methyltransferase complexes which regulates transcription through recruitment of those complexes to gene promoters. As part of the MLL1/MLL complex, involved in mono-, di- and trimethylation at 'Lys-4' of histone H3. Histone H3 'Lys-4' methylation represents a specific tag for epigenetic transcriptional activation. In association with ASH2L and WDR5, stimulates the histone methyltransferase activities of KMT2A, KMT2B, KMT2C, KMT2D, SETD1A and SETD1B. The protein is Retinoblastoma-binding protein 5 (Rbbp5) of Mus musculus (Mouse).